The sequence spans 360 residues: GTP 3',8-cyclase (360 aa).

The tract at residues 1–31 (MTVTALGVPTVRGRSEGSAVASDAPGDGPLL) is disordered. Residues 33–251 (RFGRSATDLR…LQPHFRLRPD (219 aa)) form the Radical SAM core domain. Arginine 42 provides a ligand contact to GTP. [4Fe-4S] cluster contacts are provided by cysteine 49 and cysteine 53. Tyrosine 55 serves as a coordination point for S-adenosyl-L-methionine. Cysteine 56 is a binding site for [4Fe-4S] cluster. GTP is bound at residue arginine 93. Glycine 97 contacts S-adenosyl-L-methionine. Threonine 124 is a GTP binding site. Serine 148 is an S-adenosyl-L-methionine binding site. Position 185 (lysine 185) interacts with GTP. Methionine 219 serves as a coordination point for S-adenosyl-L-methionine. Residues cysteine 287 and cysteine 290 each contribute to the [4Fe-4S] cluster site. 292 to 294 (RTR) is a binding site for GTP. A [4Fe-4S] cluster-binding site is contributed by cysteine 304.

It belongs to the radical SAM superfamily. MoaA family. As to quaternary structure, monomer and homodimer. [4Fe-4S] cluster is required as a cofactor.

The enzyme catalyses GTP + AH2 + S-adenosyl-L-methionine = (8S)-3',8-cyclo-7,8-dihydroguanosine 5'-triphosphate + 5'-deoxyadenosine + L-methionine + A + H(+). It functions in the pathway cofactor biosynthesis; molybdopterin biosynthesis. Functionally, catalyzes the cyclization of GTP to (8S)-3',8-cyclo-7,8-dihydroguanosine 5'-triphosphate. The sequence is that of GTP 3',8-cyclase from Mycobacterium ulcerans (strain Agy99).